We begin with the raw amino-acid sequence, 404 residues long: Protrudin (404 aa).

Residues 1–25 (MQSSDRDLSGPEASPSVMPEVLSEC) form a disordered region. The Cytoplasmic segment spans residues 1–63 (MQSSDRDLSG…LKDAGDGVRY (63 aa)). The tract at residues 1–92 (MQSSDRDLSG…LFLTLNEGAW (92 aa)) is sufficient for homooligomerization. The sufficient for localization to endoplasmic reticulum tubular network and for interactions with REEP1, REEP5, ATL1, ATL2, ATL3 and SPAST stretch occupies residues 1–205 (MQSSDRDLSG…LYLLPLCWVL (205 aa)). A necessary for interaction with RAB11A and function in neurite outgrowth region spans residues 51–64 (LEPLKDAGDGVRYL). A helical transmembrane segment spans residues 64–85 (LLRWQMPLCSLLTCLGLNILFL). Topologically, residues 86–90 (TLNEG) are lumenal. A helical membrane pass occupies residues 91 to 109 (AWYSVGALIISVPALLGYL). Over 110–187 (QEVCRAQLPE…NPVVSSQFYG (78 aa)) the chain is Cytoplasmic. Residues 188–208 (ALLGMVCMLYLLPLCWVLALL) constitute an intramembrane region (helical). Residues 209 to 404 (NSTLFLGNGE…CASCNQTLSK (196 aa)) are Cytoplasmic-facing. A disordered region spans residues 259-299 (DSTPAPTPTEDLTPGSVEEAEEAEPDEEFKDAIEEDDEGTP). The necessary for interaction with KIF5A stretch occupies residues 271–354 (TPGSVEEAEE…GCAATFSVLK (84 aa)). Residues 276-299 (EEAEEAEPDEEFKDAIEEDDEGTP) show a composition bias toward acidic residues. Positions 286–292 (EFKDAIE) are necessary for interaction with VAPA. The FYVE-type zinc-finger motif lies at 337–403 (TNNFGNCAGC…VCASCNQTLS (67 aa)). Zn(2+) contacts are provided by cysteine 343, cysteine 346, cysteine 359, cysteine 362, cysteine 367, cysteine 370, cysteine 395, and cysteine 398.

Can form homooligomers (monomers, dimers and tetramers). Interacts with FKBP8; may negatively regulate ZFYVE27 phosphorylation. Interacts with VAPA (via MSP domain); may regulate ZFYVE27 retention in the endoplasmic reticulum and its function in cell projections formation. Interacts with VAPB (via MSP domain). Interacts with RAB11A (GDP-bound form); regulates RAB11A. Interacts with RAB11B (GDP-bound form), REEP1, REEP5, ATL1, ATL2, ATL3, SPAST, SURF4, KIF5A, KIF5B, KIF5C and RTN3. In terms of processing, phosphorylated. Phosphorylation is induced by NGF through the MAPK/ERK pathway and modulates interaction with RAB11A.

The protein resides in the recycling endosome membrane. The protein localises to the endoplasmic reticulum membrane. It localises to the cell projection. It is found in the growth cone membrane. Functionally, key regulator of RAB11-dependent vesicular trafficking during neurite extension through polarized membrane transport. Promotes axonal elongation and contributes to the establishment of neuronal cell polarity. Involved in nerve growth factor-induced neurite formation in VAPA-dependent manner. Contributes to both the formation and stabilization of the tubular ER network. Involved in ER morphogenesis by regulating the sheet-to-tubule balance and possibly the density of tubule interconnections. Acts as an adapter protein that facilitates the interaction of KIF5A with VAPA, VAPB, SURF4, RAB11A, RAB11B and RTN3 and the ZFYVE27-KIF5A complex contributes to the transport of these proteins in neurons. Can induce formation of neurite-like membrane protrusions in non-neuronal cells in a KIF5A/B-dependent manner. In Rattus norvegicus (Rat), this protein is Protrudin (Zfyve27).